The chain runs to 63 residues: Alpha-conotoxin-like Sm1.3 (63 aa).

Residues 1-16 (MFTVFLLVVLATTVVS) form the signal peptide. The propeptide occupies 17–43 (SPSDRASDGRNAAANEKASDVIALALK). 2 disulfides stabilise this stretch: cysteine 45/cysteine 51 and cysteine 46/cysteine 59. Methionine 58 bears the Methionine sulfoxide; partial mark. Cysteine amide; partial is present on cysteine 59.

This sequence belongs to the conotoxin A superfamily. As to expression, expressed by the venom duct.

The protein localises to the secreted. Alpha-conotoxins act on postsynaptic membranes, they bind to the nicotinic acetylcholine receptors (nAChR) and thus inhibit them. The protein is Alpha-conotoxin-like Sm1.3 of Conus stercusmuscarum (Fly-specked cone).